The chain runs to 188 residues: Pyridoxal 5'-phosphate synthase subunit PdxT (188 aa).

Position 46 to 48 (46 to 48 (GES)) interacts with L-glutamine. Cys78 functions as the Nucleophile in the catalytic mechanism. Residues Arg105 and 134–135 (IR) contribute to the L-glutamine site. Active-site charge relay system residues include His170 and Glu172.

It belongs to the glutaminase PdxT/SNO family. As to quaternary structure, in the presence of PdxS, forms a dodecamer of heterodimers. Only shows activity in the heterodimer.

The enzyme catalyses aldehydo-D-ribose 5-phosphate + D-glyceraldehyde 3-phosphate + L-glutamine = pyridoxal 5'-phosphate + L-glutamate + phosphate + 3 H2O + H(+). The catalysed reaction is L-glutamine + H2O = L-glutamate + NH4(+). The protein operates within cofactor biosynthesis; pyridoxal 5'-phosphate biosynthesis. Functionally, catalyzes the hydrolysis of glutamine to glutamate and ammonia as part of the biosynthesis of pyridoxal 5'-phosphate. The resulting ammonia molecule is channeled to the active site of PdxS. This Thermotoga sp. (strain RQ2) protein is Pyridoxal 5'-phosphate synthase subunit PdxT.